The following is a 134-amino-acid chain: Large ribosomal subunit protein uL22 (134 aa).

The protein belongs to the universal ribosomal protein uL22 family. Part of the 50S ribosomal subunit. Contacts protein L32.

This protein binds specifically to 23S rRNA; its binding is stimulated by other ribosomal proteins, e.g. L4, L17, and L20. It is important during the early stages of 50S assembly. It makes multiple contacts with different domains of the 23S rRNA in the assembled 50S subunit and ribosome. Functionally, the globular domain of the protein is located by the polypeptide exit tunnel on the outside of the subunit while an extended beta-hairpin forms part of the wall of the tunnel. Forms a pair of 'tweezers' with L32 that hold together two different domains of the 23S rRNA. Interacts with the tunnel-blocking modified macrolide azithromycin. Upon binding of the macrolide troleadomycin to the ribosome, the tip of the beta-hairpin is displaced, which severely restricts the tunnel. This and experiments in E.coli have led to the suggestion that it is part of the gating mechanism involved in translation arrest in the absence of the protein export system. The sequence is that of Large ribosomal subunit protein uL22 (rplV) from Deinococcus radiodurans (strain ATCC 13939 / DSM 20539 / JCM 16871 / CCUG 27074 / LMG 4051 / NBRC 15346 / NCIMB 9279 / VKM B-1422 / R1).